The chain runs to 380 residues: DNA-directed RNA polymerase subunit Rpo1C (380 aa).

Belongs to the RNA polymerase beta' chain family. In terms of assembly, part of the RNA polymerase complex.

The protein localises to the cytoplasm. It carries out the reaction RNA(n) + a ribonucleoside 5'-triphosphate = RNA(n+1) + diphosphate. Its function is as follows. DNA-dependent RNA polymerase (RNAP) catalyzes the transcription of DNA into RNA using the four ribonucleoside triphosphates as substrates. Forms part of the jaw domain. This Archaeoglobus fulgidus (strain ATCC 49558 / DSM 4304 / JCM 9628 / NBRC 100126 / VC-16) protein is DNA-directed RNA polymerase subunit Rpo1C.